The chain runs to 570 residues: Transmembrane 7 superfamily member 3 (570 aa).

A signal peptide spans 1–21 (MGFLQLLVVAVLASEHRVAGA). Residues Asn27, Asn61, Asn75, Asn87, and Asn264 are each glycosylated (N-linked (GlcNAc...) asparagine). A run of 7 helical transmembrane segments spans residues 296-313 (VFFTLFALLGFFICFFGH), 320-342 (LFFIGFIIMGFFFYILITRLTPI), 347-369 (NLILTAVTGSVGGMFLVAVWWRF), 371-393 (ILSICMLCVGLVLGFLISSVTFF), 408-430 (FWVTFSCIAILIPVVFMGCLRIL), 437-459 (VIGSYSVVLAIDSYWSTSLSYIT), and 479-501 (PFQTNDFIILAVWGMLAVSGITL).

In terms of tissue distribution, widely expressed. Highly expressed in kidney and pancreas.

The protein localises to the cell membrane. Involved in the inhibition of cytokine-induced death of pancreatic beta cells. Involved in the promotion of insulin secretion from pancreatic beta cells. Is a downstream transcriptional target of p53/TP53, and acts as a pro-survival homeostatic factor that attenuates the development of cellular stress. Maintains protein homeostasis and promotes cell survival through attenuation of endoplasmic reticulum (ER) stress and the subsequent induction of unfolded protein response (UPR). This chain is Transmembrane 7 superfamily member 3 (TM7SF3), found in Homo sapiens (Human).